Here is a 274-residue protein sequence, read N- to C-terminus: uncharacterized protein (274 aa).

Helical transmembrane passes span 9–29, 64–84, 135–155, 165–185, and 219–239; these read SLLL…VSIL, WFWH…FFIL, LAGH…ALLL, MSSM…WQNA, and IIVY…LVLG.

The protein belongs to the steroid 5-alpha reductase family.

The protein localises to the endoplasmic reticulum membrane. This is an uncharacterized protein from Schizosaccharomyces pombe (strain 972 / ATCC 24843) (Fission yeast).